A 266-amino-acid polypeptide reads, in one-letter code: Integral membrane protein 2B (266 aa).

Residues 1 to 54 (MVKVTFNSALAQKEAKKDEPKSSEEALIAPPDAVAVDCKDPDDVVPVGQRRAWC) lie on the Cytoplasmic side of the membrane. Residues 55 to 75 (WCMCFGLAFMLAGVILGGAYL) traverse the membrane as a helical; Signal-anchor for type II membrane protein segment. The Lumenal segment spans residues 76-266 (YKYFALQPDD…KFAVETLICS (191 aa)). Residues 102-134 (EPSADAPAARYQTIEENIKIFEEDAVEFISVPV) form a necessary for interaction with APP and inhibitor effects on APP processing region. A BRICHOS domain is found at 137 to 231 (FADSDPANIV…LCHDKETYKL (95 aa)). Intrachain disulfides connect cysteine 164-cysteine 223 and cysteine 248-cysteine 265. Asparagine 170 carries N-linked (GlcNAc...) asparagine glycosylation.

Belongs to the ITM2 family. As to quaternary structure, homodimer; disulfide-linked. Interacts with SPPL2A and SPPL2B. Interacts with APP. Mature BRI2 (mBRI2) interacts with the APP amyloid-beta A4 protein; the interaction occurs at the cell surface and in the endocytic compartments and enable alpha- and beta-secretase-induced APP cleavage inhibition. Mature BRI2 (mBRI2) interacts with the APP C99; the interaction occurs in the endocytic compartments and enable gamma-secretase-induced C99 cleavage inhibition. May form heterodimers with Bri23 peptide and APP amyloid-beta protein 40. Interacts with ADAM7 in sperm; the interaction increases following capacitation. Post-translationally, the ectodomain C-terminal part of the imBRI2 is processed by furin producing a secreted Bri23 peptide and a mature BRI2, membrane form (mBRI2). The remaining part of the ectodomain of mBRI2 containing the BRICHOS domain is cleaved by ADAM10 and is secreted (BRI2C, soluble form). The membrane-bound N-terminal fragment (BRI2C, membrane form) is further proteolytically processed by SPPL2A and SPPL2B through regulated intramembrane proteolysis producing a secreted C-peptide and a BRI2 intracellular domain (BRI2 ICD) released in the cytosol. Shedding by ADAM10 facilitates intramembrane cleavage but is not absolutely required for BRI2 ICD generation. In terms of processing, glycosylation at Asn-170 is important for cell surface localization, but doesn't affect furin- and ADAM10-induced proteolytic processing.

The protein resides in the golgi apparatus membrane. The protein localises to the cell membrane. It is found in the endosome membrane. It localises to the secreted. Functionally, plays a regulatory role in the processing of the amyloid-beta A4 precursor protein (APP) and acts as an inhibitor of the amyloid-beta peptide aggregation and fibrils deposition. Plays a role in the induction of neurite outgrowth. Functions as a protease inhibitor by blocking access of secretases to APP cleavage sites. Its function is as follows. Mature BRI2 (mBRI2) functions as a modulator of the amyloid-beta A4 precursor protein (APP) processing leading to a strong reduction in the secretion of secretase-processed amyloid-beta protein 40 and amyloid-beta protein 42. In terms of biological role, bri23 peptide prevents aggregation of APP amyloid-beta protein 42 into toxic oligomers. The polypeptide is Integral membrane protein 2B (Itm2b) (Rattus norvegicus (Rat)).